The sequence spans 76 residues: Beta-defensin 121 (76 aa).

Positions 1–15 are cleaved as a signal peptide; sequence MKLLLLLLTVTLLLA. 3 cysteine pairs are disulfide-bonded: Cys23-Cys50, Cys30-Cys44, and Cys34-Cys51.

It belongs to the beta-defensin family.

Its subcellular location is the secreted. Its function is as follows. Has antibacterial activity. The sequence is that of Beta-defensin 121 (DEFB121) from Pan troglodytes (Chimpanzee).